The sequence spans 350 residues: Ion-translocating oxidoreductase complex subunit D (350 aa).

A run of 4 helical transmembrane segments spans residues 37-57 (YFFG…ALTA), 68-88 (AVLS…IGVA), 89-109 (IPPI…IVLV), and 120-140 (IFNP…VQMT). At T185 the chain carries FMN phosphoryl threonine. 5 helical membrane-spanning segments follow: residues 212–232 (GYGV…LIML), 239–259 (WHIS…GYLL), 265–285 (VGPL…FIAT), 291–311 (ATSV…VYVI), and 315–335 (GGYP…APFI).

It belongs to the NqrB/RnfD family. As to quaternary structure, the complex is composed of six subunits: RnfA, RnfB, RnfC, RnfD, RnfE and RnfG. It depends on FMN as a cofactor.

Its subcellular location is the cell inner membrane. In terms of biological role, part of a membrane-bound complex that couples electron transfer with translocation of ions across the membrane. The polypeptide is Ion-translocating oxidoreductase complex subunit D (Shewanella pealeana (strain ATCC 700345 / ANG-SQ1)).